The following is a 1337-amino-acid chain: Sister chromatid cohesion protein PDS5 homolog A (1337 aa).

An N-acetylmethionine modification is found at Met1. One copy of the HEAT repeat lies at 393–429 (ALVNDQLLGFVRERTLDKRWRVRKEAMMGLAQLYKKY). Ser1097 carries the post-translational modification Phosphoserine. N6-acetyllysine is present on Lys1146. Residues 1150 to 1337 (ATGRKPYVRS…PAERQIDLQR (188 aa)) are disordered. The segment covering 1159–1180 (STGTETGSNINVNSELNPSTGN) has biased composition (polar residues). Ser1195 bears the Phosphoserine mark. The residue at position 1208 (Thr1208) is a Phosphothreonine. Lys1211 is modified (N6-acetyllysine). A compositionally biased stretch (polar residues) spans 1223–1233 (SDQATQGNISS). Lys1290 bears the N6-acetyllysine mark. Ser1305 bears the Phosphoserine mark. Positions 1321–1337 (DLAKKAAPAERQIDLQR) are enriched in basic and acidic residues.

The protein belongs to the PDS5 family. Interacts with the cohesin complex. Interacts with WAPL (via FGF motifs) or CDCA5 (via the FGF motif); the interaction is direct, cohesin-dependent and competitive. Interacts with SMC3. Interacts with TP63. Highest level in colon. Low levels in lung, ovary, breast and kidney. Reduced level in renal tumor tissue. Isoform 2 is expressed in kidney.

The protein localises to the nucleus. Its function is as follows. Probable regulator of sister chromatid cohesion in mitosis which may stabilize cohesin complex association with chromatin. May couple sister chromatid cohesion during mitosis to DNA replication. Cohesion ensures that chromosome partitioning is accurate in both meiotic and mitotic cells and plays an important role in DNA repair. This is Sister chromatid cohesion protein PDS5 homolog A from Homo sapiens (Human).